The chain runs to 82 residues: Putative antitoxin RelB1 (82 aa).

Antitoxin component of a type II toxin-antitoxin (TA) system. Its cognate toxin is RelE1 (Potential). This chain is Putative antitoxin RelB1 (relB1), found in Methanocaldococcus jannaschii (strain ATCC 43067 / DSM 2661 / JAL-1 / JCM 10045 / NBRC 100440) (Methanococcus jannaschii).